Reading from the N-terminus, the 361-residue chain is Chorismate synthase (361 aa).

A compositionally biased stretch (basic and acidic residues) spans 40 to 49 (DLQHDLDRRR). Residues 40-60 (DLQHDLDRRRPGTSRHTTQRR) form a disordered region. NADP(+) is bound by residues Arg-48 and Arg-54. FMN is bound by residues 125 to 127 (RSS), 237 to 238 (NA), Gly-277, 292 to 296 (KPTSS), and Arg-318.

The protein belongs to the chorismate synthase family. As to quaternary structure, homotetramer. Requires FMNH2 as cofactor.

It catalyses the reaction 5-O-(1-carboxyvinyl)-3-phosphoshikimate = chorismate + phosphate. It participates in metabolic intermediate biosynthesis; chorismate biosynthesis; chorismate from D-erythrose 4-phosphate and phosphoenolpyruvate: step 7/7. In terms of biological role, catalyzes the anti-1,4-elimination of the C-3 phosphate and the C-6 proR hydrogen from 5-enolpyruvylshikimate-3-phosphate (EPSP) to yield chorismate, which is the branch point compound that serves as the starting substrate for the three terminal pathways of aromatic amino acid biosynthesis. This reaction introduces a second double bond into the aromatic ring system. This chain is Chorismate synthase, found in Chromohalobacter salexigens (strain ATCC BAA-138 / DSM 3043 / CIP 106854 / NCIMB 13768 / 1H11).